We begin with the raw amino-acid sequence, 170 residues long: Phosphopantetheine adenylyltransferase (170 aa).

Threonine 10 provides a ligand contact to substrate. ATP is bound by residues 10 to 11 and histidine 18; that span reads TF. Substrate contacts are provided by lysine 42, leucine 75, and arginine 89. ATP-binding positions include 90-92, glutamate 100, and 125-131; these read GVR and YTYVASS.

The protein belongs to the bacterial CoaD family. Homohexamer. Mg(2+) serves as cofactor.

The protein resides in the cytoplasm. The catalysed reaction is (R)-4'-phosphopantetheine + ATP + H(+) = 3'-dephospho-CoA + diphosphate. It functions in the pathway cofactor biosynthesis; coenzyme A biosynthesis; CoA from (R)-pantothenate: step 4/5. Its function is as follows. Reversibly transfers an adenylyl group from ATP to 4'-phosphopantetheine, yielding dephospho-CoA (dPCoA) and pyrophosphate. This Chlorobium limicola (strain DSM 245 / NBRC 103803 / 6330) protein is Phosphopantetheine adenylyltransferase.